The primary structure comprises 248 residues: tRNA (guanine-N(1)-)-methyltransferase (248 aa).

S-adenosyl-L-methionine-binding positions include Gly126 and 150–155 (LGDYVL). The interval 224–248 (WRRTQQEERTRERRPDLWAAFDSED) is disordered. Residues 227–239 (TQQEERTRERRPD) are compositionally biased toward basic and acidic residues.

The protein belongs to the RNA methyltransferase TrmD family. Homodimer.

It is found in the cytoplasm. It catalyses the reaction guanosine(37) in tRNA + S-adenosyl-L-methionine = N(1)-methylguanosine(37) in tRNA + S-adenosyl-L-homocysteine + H(+). In terms of biological role, specifically methylates guanosine-37 in various tRNAs. The chain is tRNA (guanine-N(1)-)-methyltransferase from Micrococcus luteus (strain ATCC 4698 / DSM 20030 / JCM 1464 / CCM 169 / CCUG 5858 / IAM 1056 / NBRC 3333 / NCIMB 9278 / NCTC 2665 / VKM Ac-2230) (Micrococcus lysodeikticus).